A 151-amino-acid chain; its full sequence is Small ribosomal subunit protein bS6 (151 aa).

The disordered stretch occupies residues 96 to 151; that stretch reads HEEGQSAMLTRRDDRRERDGDDRPRRREGGFDRGDRGDRGDRGPRRPRDNEAGEGA.

This sequence belongs to the bacterial ribosomal protein bS6 family.

In terms of biological role, binds together with bS18 to 16S ribosomal RNA. The chain is Small ribosomal subunit protein bS6 from Brucella anthropi (strain ATCC 49188 / DSM 6882 / CCUG 24695 / JCM 21032 / LMG 3331 / NBRC 15819 / NCTC 12168 / Alc 37) (Ochrobactrum anthropi).